We begin with the raw amino-acid sequence, 190 residues long: MIGKLSGTLDDKNPPQVIVDCHGVGYEVLVPMSTFYNLPELGARVSLLTHFVVREDAQILYGFATSQERAAFRELIKISGVGPRTALSVLSGMSVAELAQAVTLQEGGRLIKVPGIGKKTAERLLLELKGKLGPDIGVAASVANDSQADILQALLALGYSDKEAAAALKALPSDVGVSEGIRLALRALGK.

A domain I region spans residues M1–A64. A domain II region spans residues T65–G137. The interval G137 to S141 is flexible linker. A domain III region spans residues V142–K190.

It belongs to the RuvA family. In terms of assembly, homotetramer. Forms an RuvA(8)-RuvB(12)-Holliday junction (HJ) complex. HJ DNA is sandwiched between 2 RuvA tetramers; dsDNA enters through RuvA and exits via RuvB. An RuvB hexamer assembles on each DNA strand where it exits the tetramer. Each RuvB hexamer is contacted by two RuvA subunits (via domain III) on 2 adjacent RuvB subunits; this complex drives branch migration. In the full resolvosome a probable DNA-RuvA(4)-RuvB(12)-RuvC(2) complex forms which resolves the HJ.

Its subcellular location is the cytoplasm. Its function is as follows. The RuvA-RuvB-RuvC complex processes Holliday junction (HJ) DNA during genetic recombination and DNA repair, while the RuvA-RuvB complex plays an important role in the rescue of blocked DNA replication forks via replication fork reversal (RFR). RuvA specifically binds to HJ cruciform DNA, conferring on it an open structure. The RuvB hexamer acts as an ATP-dependent pump, pulling dsDNA into and through the RuvAB complex. HJ branch migration allows RuvC to scan DNA until it finds its consensus sequence, where it cleaves and resolves the cruciform DNA. The protein is Holliday junction branch migration complex subunit RuvA of Albidiferax ferrireducens (strain ATCC BAA-621 / DSM 15236 / T118) (Rhodoferax ferrireducens).